Reading from the N-terminus, the 139-residue chain is MAKFLIVEARFYSHLNDMLIQGAKQAIEEAGHECEVITVPGALEIPAAITMASDTGLYDAFVALGVVIRGETYHFEIVASESARGVMALTLDGLVIGNGILTVENEQQALVRADPQQKNKGGDAAKAAITMFNLKKKLS.

5-amino-6-(D-ribitylamino)uracil contacts are provided by residues F11, 42 to 44 (ALE), and 66 to 68 (VVI). A (2S)-2-hydroxy-3-oxobutyl phosphate-binding site is contributed by 71 to 72 (ET). The Proton donor role is filled by H74. N98 is a 5-amino-6-(D-ribitylamino)uracil binding site. (2S)-2-hydroxy-3-oxobutyl phosphate is bound at residue R112.

Belongs to the DMRL synthase family.

It carries out the reaction (2S)-2-hydroxy-3-oxobutyl phosphate + 5-amino-6-(D-ribitylamino)uracil = 6,7-dimethyl-8-(1-D-ribityl)lumazine + phosphate + 2 H2O + H(+). It functions in the pathway cofactor biosynthesis; riboflavin biosynthesis; riboflavin from 2-hydroxy-3-oxobutyl phosphate and 5-amino-6-(D-ribitylamino)uracil: step 1/2. In terms of biological role, catalyzes the formation of 6,7-dimethyl-8-ribityllumazine by condensation of 5-amino-6-(D-ribitylamino)uracil with 3,4-dihydroxy-2-butanone 4-phosphate. This is the penultimate step in the biosynthesis of riboflavin. This Zymomonas mobilis subsp. mobilis (strain ATCC 31821 / ZM4 / CP4) protein is 6,7-dimethyl-8-ribityllumazine synthase.